Reading from the N-terminus, the 241-residue chain is Corrinoid adenosyltransferase MMAB (241 aa).

Residues 1 to 26 (MAVWGPGGRLGLRGCLGARKLLCPRF) constitute a mitochondrion transit peptide. Residues 27–69 (QSRGPQGVEDGDRPQPSSKTPKVPKIYTKTGDKGFSSTFTGER) are disordered. Residues 54–63 (TKTGDKGFSS) and Lys72 each bind ATP. At Ser128 the chain carries Phosphoserine. 184–188 (RRAER) contributes to the ATP binding site. Lys205 is modified (N6-succinyllysine). Asn208 lines the ATP pocket. The residue at position 224 (Lys224) is an N6-acetyllysine; alternate. Position 224 is an N6-succinyllysine; alternate (Lys224).

The protein belongs to the Cob(I)alamin adenosyltransferase family. In terms of assembly, homotrimer.

The protein resides in the mitochondrion. The enzyme catalyses cob(I)alamin-[corrinoid adenosyltransferase] + ATP = apo-[corrinoid adenosyltransferase] + adenosylcob(III)alamin + triphosphate. Its function is as follows. Converts cob(I)alamin to adenosylcobalamin (adenosylcob(III)alamin), a coenzyme for methylmalonyl-CoA mutase, therefore participates in the final step of the vitamin B12 conversion. Generates adenosylcobalamin (AdoCbl) and directly delivers the cofactor to MUT in a transfer that is stimulated by ATP-binding to MMAB and gated by MMAA. The polypeptide is Corrinoid adenosyltransferase MMAB (Bos taurus (Bovine)).